The chain runs to 78 residues: MAGRKGGRGKRRKVCYFTANNITHIDYKDVDLLKKFISERGKILPRRVTGTSAKYQRKLTVAIKRARQMALLPYVADE.

Belongs to the bacterial ribosomal protein bS18 family. As to quaternary structure, part of the 30S ribosomal subunit. Forms a tight heterodimer with protein bS6.

Its function is as follows. Binds as a heterodimer with protein bS6 to the central domain of the 16S rRNA, where it helps stabilize the platform of the 30S subunit. The protein is Small ribosomal subunit protein bS18 of Geobacillus kaustophilus (strain HTA426).